Consider the following 216-residue polypeptide: N-glycosylase/DNA lyase (216 aa).

8-oxoguanine-binding residues include Gln-27, Ser-48, and Trp-59. The interval 106–170 (EHYYENMVAL…LDYRLKKINP (65 aa)) is helix-hairpin-helix. The active-site Schiff-base intermediate with DNA is the Lys-130. Residues Phe-134 and Pro-160 each coordinate 8-oxoguanine. Asp-162 is a catalytic residue. 2 residues coordinate 8-oxoguanine: Asp-190 and Trp-194.

Belongs to the archaeal N-glycosylase/DNA lyase (AGOG) family.

It catalyses the reaction 2'-deoxyribonucleotide-(2'-deoxyribose 5'-phosphate)-2'-deoxyribonucleotide-DNA = a 3'-end 2'-deoxyribonucleotide-(2,3-dehydro-2,3-deoxyribose 5'-phosphate)-DNA + a 5'-end 5'-phospho-2'-deoxyribonucleoside-DNA + H(+). DNA repair enzyme that is part of the base excision repair (BER) pathway; protects from oxidative damage by removing the major product of DNA oxidation, 8-oxoguanine (GO), from single- and double-stranded DNA substrates. The chain is N-glycosylase/DNA lyase from Nanoarchaeum equitans (strain Kin4-M).